Here is a 196-residue protein sequence, read N- to C-terminus: Putative NADH dehydrogenase/NAD(P)H nitroreductase XOO4023 (196 aa).

It belongs to the nitroreductase family. HadB/RutE subfamily. FMN serves as cofactor.

This chain is Putative NADH dehydrogenase/NAD(P)H nitroreductase XOO4023, found in Xanthomonas oryzae pv. oryzae (strain MAFF 311018).